The following is a 282-amino-acid chain: NADPH-dependent 7-cyano-7-deazaguanine reductase (282 aa).

Position 88–90 (88–90 (IES)) interacts with substrate. Residue 90–91 (SK) coordinates NADPH. Residue cysteine 189 is the Thioimide intermediate of the active site. Aspartate 196 serves as the catalytic Proton donor. 228-229 (HE) is a substrate binding site. 257–258 (RG) contacts NADPH.

The protein belongs to the GTP cyclohydrolase I family. QueF type 2 subfamily. As to quaternary structure, homodimer.

It is found in the cytoplasm. The catalysed reaction is 7-aminomethyl-7-carbaguanine + 2 NADP(+) = 7-cyano-7-deazaguanine + 2 NADPH + 3 H(+). It participates in tRNA modification; tRNA-queuosine biosynthesis. Functionally, catalyzes the NADPH-dependent reduction of 7-cyano-7-deazaguanine (preQ0) to 7-aminomethyl-7-deazaguanine (preQ1). The sequence is that of NADPH-dependent 7-cyano-7-deazaguanine reductase from Photorhabdus laumondii subsp. laumondii (strain DSM 15139 / CIP 105565 / TT01) (Photorhabdus luminescens subsp. laumondii).